The chain runs to 280 residues: MAAVVALSLRRRLPATTLGGACLQASRGAQTAAATAPRIKKFAIYRWDPDKAGDKPHMQTYEVDLNKCGPMVLDALIKIKNEVDSTLTFRRSCREGICGSCAMNINGGNTLACTRRIDTNLNKVSKIYPLPHMYVIKDLVPDLSNFYAQYKSIEPYLKKKDESQEGKQQYLQSIEEREKLDGLYECILCACCSTSCPSYWWNGDKYLGPAVLMQAYRWMIDSRDDFTEERLAKLQDPFSLYRCHTIMNCTRTCPKGLNPGKAIAEIKKMMATYKEKKASV.

The transit peptide at 1–28 directs the protein to the mitochondrion; it reads MAAVVALSLRRRLPATTLGGACLQASRG. The 94-residue stretch at 40 to 133 folds into the 2Fe-2S ferredoxin-type domain; sequence KKFAIYRWDP…VSKIYPLPHM (94 aa). N6-acetyllysine occurs at positions 51 and 55. Residues C93, C98, C101, and C113 each coordinate [2Fe-2S] cluster. The segment at 146 to 218 is interaction with SDHAF1; sequence FYAQYKSIEP…PAVLMQAYRW (73 aa). Residues 176–206 enclose the 4Fe-4S ferredoxin-type domain; that stretch reads EREKLDGLYECILCACCSTSCPSYWWNGDKY. [4Fe-4S] cluster is bound by residues C186, C189, and C192. Position 196 (C196) interacts with [3Fe-4S] cluster. W201 serves as a coordination point for a ubiquinone. C243 and C249 together coordinate [3Fe-4S] cluster. Residue C253 coordinates [4Fe-4S] cluster.

Belongs to the succinate dehydrogenase/fumarate reductase iron-sulfur protein family. Component of complex II composed of four subunits: the flavoprotein (FP) SDHA, iron-sulfur protein (IP) SDHB, and a cytochrome b560 composed of SDHC and SDHD. Interacts with SDHAF1; the interaction is required for iron-sulfur cluster incorporation into SDHB. In terms of assembly, (Microbial infection) Interacts with JC virus small t antigen. [2Fe-2S] cluster is required as a cofactor. The cofactor is [3Fe-4S] cluster. It depends on [4Fe-4S] cluster as a cofactor.

The protein localises to the mitochondrion inner membrane. It catalyses the reaction a quinone + succinate = fumarate + a quinol. It carries out the reaction (R)-malate + a quinone = enol-oxaloacetate + a quinol. The catalysed reaction is (S)-malate + a quinone = enol-oxaloacetate + a quinol. The protein operates within carbohydrate metabolism; tricarboxylic acid cycle; fumarate from succinate (eukaryal route): step 1/1. Its activity is regulated as follows. Enol-oxaloacetate inhibits the succinate dehydrogenase activity. In terms of biological role, iron-sulfur protein (IP) subunit of the succinate dehydrogenase complex (mitochondrial respiratory chain complex II), responsible for transferring electrons from succinate to ubiquinone (coenzyme Q). SDH also oxidizes malate to the non-canonical enol form of oxaloacetate, enol-oxaloacetate. Enol-oxaloacetate, which is a potent inhibitor of the succinate dehydrogenase activity, is further isomerized into keto-oxaloacetate. The protein is Succinate dehydrogenase [ubiquinone] iron-sulfur subunit, mitochondrial (SDHB) of Homo sapiens (Human).